Reading from the N-terminus, the 109-residue chain is T cell receptor alpha variable 26-2 (109 aa).

The first 19 residues, Met-1–Ala-19, serve as a signal peptide directing secretion. The region spanning Lys-20–Asp-109 is the Ig-like domain. A disulfide bridge connects residues Cys-39 and Cys-105. N-linked (GlcNAc...) asparagine glycosylation occurs at Asn-40.

In terms of assembly, alpha-beta TR is a heterodimer composed of an alpha and beta chain; disulfide-linked. The alpha-beta TR is associated with the transmembrane signaling CD3 coreceptor proteins to form the TR-CD3 (TcR or TCR). The assembly of alpha-beta TR heterodimers with CD3 occurs in the endoplasmic reticulum where a single alpha-beta TR heterodimer associates with one CD3D-CD3E heterodimer, one CD3G-CD3E heterodimer and one CD247 homodimer forming a stable octameric structure. CD3D-CD3E and CD3G-CD3E heterodimers preferentially associate with TR alpha and TR beta chains, respectively. The association of the CD247 homodimer is the last step of TcR assembly in the endoplasmic reticulum and is required for transport to the cell surface.

It is found in the cell membrane. Its function is as follows. V region of the variable domain of T cell receptor (TR) alpha chain that participates in the antigen recognition. Alpha-beta T cell receptors are antigen specific receptors which are essential to the immune response and are present on the cell surface of T lymphocytes. Recognize peptide-major histocompatibility (MH) (pMH) complexes that are displayed by antigen presenting cells (APC), a prerequisite for efficient T cell adaptive immunity against pathogens. Binding of alpha-beta TR to pMH complex initiates TR-CD3 clustering on the cell surface and intracellular activation of LCK that phosphorylates the ITAM motifs of CD3G, CD3D, CD3E and CD247 enabling the recruitment of ZAP70. In turn ZAP70 phosphorylates LAT, which recruits numerous signaling molecules to form the LAT signalosome. The LAT signalosome propagates signal branching to three major signaling pathways, the calcium, the mitogen-activated protein kinase (MAPK) kinase and the nuclear factor NF-kappa-B (NF-kB) pathways, leading to the mobilization of transcription factors that are critical for gene expression and essential for T cell growth and differentiation. The T cell repertoire is generated in the thymus, by V-(D)-J rearrangement. This repertoire is then shaped by intrathymic selection events to generate a peripheral T cell pool of self-MH restricted, non-autoaggressive T cells. Post-thymic interaction of alpha-beta TR with the pMH complexes shapes TR structural and functional avidity. The sequence is that of T cell receptor alpha variable 26-2 from Homo sapiens (Human).